Here is a 227-residue protein sequence, read N- to C-terminus: Cytochrome c oxidase subunit 2 (227 aa).

At 1-14 (MAYPFQLGLQDATS) the chain is on the mitochondrial intermembrane side. Residues 15–45 (PIMEELTNFHDHTLMIVFLISTLVLYIISLM) traverse the membrane as a helical segment. At 46–59 (LTTKLTHTSTMDAQ) the chain is on the mitochondrial matrix side. A helical transmembrane segment spans residues 60–87 (EVETIWTILPAVILILIALPSLRILYMM). Residues 88-227 (DEINNPVLTV…YFENWSASMI (140 aa)) are Mitochondrial intermembrane-facing. Cu cation-binding residues include His161, Cys196, Glu198, Cys200, His204, and Met207. Glu198 serves as a coordination point for Mg(2+). Phosphotyrosine is present on Tyr218.

The protein belongs to the cytochrome c oxidase subunit 2 family. In terms of assembly, component of the cytochrome c oxidase (complex IV, CIV), a multisubunit enzyme composed of 14 subunits. The complex is composed of a catalytic core of 3 subunits MT-CO1, MT-CO2 and MT-CO3, encoded in the mitochondrial DNA, and 11 supernumerary subunits COX4I, COX5A, COX5B, COX6A, COX6B, COX6C, COX7A, COX7B, COX7C, COX8 and NDUFA4, which are encoded in the nuclear genome. The complex exists as a monomer or a dimer and forms supercomplexes (SCs) in the inner mitochondrial membrane with NADH-ubiquinone oxidoreductase (complex I, CI) and ubiquinol-cytochrome c oxidoreductase (cytochrome b-c1 complex, complex III, CIII), resulting in different assemblies (supercomplex SCI(1)III(2)IV(1) and megacomplex MCI(2)III(2)IV(2)). Found in a complex with TMEM177, COA6, COX18, COX20, SCO1 and SCO2. Interacts with TMEM177 in a COX20-dependent manner. Interacts with COX20. Interacts with COX16. It depends on Cu cation as a cofactor.

It localises to the mitochondrion inner membrane. The catalysed reaction is 4 Fe(II)-[cytochrome c] + O2 + 8 H(+)(in) = 4 Fe(III)-[cytochrome c] + 2 H2O + 4 H(+)(out). Functionally, component of the cytochrome c oxidase, the last enzyme in the mitochondrial electron transport chain which drives oxidative phosphorylation. The respiratory chain contains 3 multisubunit complexes succinate dehydrogenase (complex II, CII), ubiquinol-cytochrome c oxidoreductase (cytochrome b-c1 complex, complex III, CIII) and cytochrome c oxidase (complex IV, CIV), that cooperate to transfer electrons derived from NADH and succinate to molecular oxygen, creating an electrochemical gradient over the inner membrane that drives transmembrane transport and the ATP synthase. Cytochrome c oxidase is the component of the respiratory chain that catalyzes the reduction of oxygen to water. Electrons originating from reduced cytochrome c in the intermembrane space (IMS) are transferred via the dinuclear copper A center (CU(A)) of subunit 2 and heme A of subunit 1 to the active site in subunit 1, a binuclear center (BNC) formed by heme A3 and copper B (CU(B)). The BNC reduces molecular oxygen to 2 water molecules using 4 electrons from cytochrome c in the IMS and 4 protons from the mitochondrial matrix. The protein is Cytochrome c oxidase subunit 2 (MT-CO2) of Leopoldamys sabanus (Long-tailed giant rat).